The primary structure comprises 531 residues: Light-independent protochlorophyllide reductase subunit B (531 aa).

[4Fe-4S] cluster is bound at residue D36. D291 (proton donor) is an active-site residue. 426–427 (GL) lines the substrate pocket.

Belongs to the ChlB/BchB/BchZ family. As to quaternary structure, protochlorophyllide reductase is composed of three subunits; ChlL, ChlN and ChlB. Forms a heterotetramer of two ChlB and two ChlN subunits. It depends on [4Fe-4S] cluster as a cofactor.

It carries out the reaction chlorophyllide a + oxidized 2[4Fe-4S]-[ferredoxin] + 2 ADP + 2 phosphate = protochlorophyllide a + reduced 2[4Fe-4S]-[ferredoxin] + 2 ATP + 2 H2O. The protein operates within porphyrin-containing compound metabolism; chlorophyll biosynthesis (light-independent). Functionally, component of the dark-operative protochlorophyllide reductase (DPOR) that uses Mg-ATP and reduced ferredoxin to reduce ring D of protochlorophyllide (Pchlide) to form chlorophyllide a (Chlide). This reaction is light-independent. The NB-protein (ChlN-ChlB) is the catalytic component of the complex. This Prochlorococcus marinus (strain MIT 9211) protein is Light-independent protochlorophyllide reductase subunit B.